We begin with the raw amino-acid sequence, 394 residues long: Mannosyl-3-phosphoglycerate synthase (394 aa).

It belongs to the glycosyltransferase 2 family.

Its subcellular location is the cytoplasm. The catalysed reaction is (2R)-3-phosphoglycerate + GDP-alpha-D-mannose = 2-O-(alpha-D-mannosyl)-3-phosphoglycerate + GDP + H(+). It functions in the pathway carbohydrate biosynthesis; 2-(alpha-D-mannosyl)-D-glycerate biosynthesis; 2-(alpha-D-mannosyl)-D-glycerate from GDP-alpha-D-mannose (MPG route): step 1/2. Functionally, transfers a mannosyl group from GDP-mannose to phosphoglycerate to form mannosyl-3-phosphoglycerate (MPG). The polypeptide is Mannosyl-3-phosphoglycerate synthase (mngA) (Pyrococcus furiosus (strain ATCC 43587 / DSM 3638 / JCM 8422 / Vc1)).